Reading from the N-terminus, the 363-residue chain is Anhydro-N-acetylmuramic acid kinase (363 aa).

Position 9–16 (9–16 (GTSLDGID)) interacts with ATP.

Belongs to the anhydro-N-acetylmuramic acid kinase family.

The enzyme catalyses 1,6-anhydro-N-acetyl-beta-muramate + ATP + H2O = N-acetyl-D-muramate 6-phosphate + ADP + H(+). Its pathway is amino-sugar metabolism; 1,6-anhydro-N-acetylmuramate degradation. The protein operates within cell wall biogenesis; peptidoglycan recycling. In terms of biological role, catalyzes the specific phosphorylation of 1,6-anhydro-N-acetylmuramic acid (anhMurNAc) with the simultaneous cleavage of the 1,6-anhydro ring, generating MurNAc-6-P. Is required for the utilization of anhMurNAc either imported from the medium or derived from its own cell wall murein, and thus plays a role in cell wall recycling. The sequence is that of Anhydro-N-acetylmuramic acid kinase from Nitrosomonas europaea (strain ATCC 19718 / CIP 103999 / KCTC 2705 / NBRC 14298).